A 985-amino-acid polypeptide reads, in one-letter code: Na(+)/H(+) antiporter (985 aa).

Residues 1–12 are Cytoplasmic-facing; it reads MAIWEQLEVSKA. A helical transmembrane segment spans residues 13–33; it reads HVAYACVGVFSSIFSLVSLYV. At 34–36 the chain is on the extracellular side; that stretch reads KEK. Residues 37–57 traverse the membrane as a helical segment; sequence LYIGESTVAGIFGLIVGPVCL. At 58–70 the chain is on the cytoplasmic side; the sequence is NWFNPLKWGNSDS. The chain crosses the membrane as a helical span at residues 71–91; that stretch reads ITLEITRIVLCLQIFAVAVEL. The Extracellular portion of the chain corresponds to 92-105; the sequence is PRKYMLKHWVSVTM. A helical transmembrane segment spans residues 106-126; it reads LLLPVMTAGWLIIGLFVWILI. The Cytoplasmic portion of the chain corresponds to 127-128; that stretch reads PG. The chain crosses the membrane as a helical span at residues 129–149; the sequence is LNFSASLLISACITATDPILA. At 150 to 176 the chain is on the extracellular side; that stretch reads QSVVSGKFAQRVPGHLRNLLSAESGCN. A helical transmembrane segment spans residues 177–197; that stretch reads DGMAFPFLFLSMNLILHPGNG. Residues 198 to 203 are Cytoplasmic-facing; it reads REIVKD. Residues 204–224 form a helical membrane-spanning segment; that stretch reads WICVTILYECLFGCLLGCFIG. The Extracellular portion of the chain corresponds to 225–244; the sequence is YVGRITIRFAEKKNIIDRES. The chain crosses the membrane as a helical span at residues 245–265; the sequence is FLAFYVVLAFMCAGFGSILGV. Over 266–294 the chain is Cytoplasmic; the sequence is DDLLVSFAAGATFAWDGWFSQKTQESNVS. Residues 295 to 315 form a helical membrane-spanning segment; the sequence is TVIDLLLNYAYFIYFGAIIPW. At 316-319 the chain is on the extracellular side; it reads SQFN. Residues 320–340 form a helical membrane-spanning segment; sequence NGEIGTNVWRLIILSIVVIFL. Residues 341 to 361 lie on the Cytoplasmic side of the membrane; that stretch reads RRIPAVMILRPLIPDIKSWRE. The helical transmembrane segment at 362-382 threads the bilayer; it reads ALFVGHFGPIGVGAIFAAILA. Over 383 to 410 the chain is Extracellular; that stretch reads RGELESTFSDEPTPLNVVPSKEESKHWQ. A helical membrane pass occupies residues 411 to 431; the sequence is LIACIWPITCFFIVTSIIVHG. Over 432 to 985 the chain is Cytoplasmic; the sequence is SSVAIITLGR…ALSKTLGLNK (554 aa). Disordered stretches follow at residues 489-701 and 726-760; these read MTLS…KPGT and DRNE…GGRL. Residues 517–526 are compositionally biased toward polar residues; it reads NNDQIGSVAT. A compositionally biased stretch (basic residues) spans 538-558; it reads PRRRKLSRKEKRLNRRQKLRN. Composition is skewed to basic and acidic residues over residues 559-572 and 580-593; these read KGRE…KNEM and DLGR…KEAR. Ser-568 is subject to Phosphoserine. Low complexity predominate over residues 637–646; it reads SFESSERSSS. Positions 661-675 are enriched in acidic residues; sequence EETESEIESEDEMEN. Residues 676–698 are compositionally biased toward basic and acidic residues; that stretch reads ESERSMASSEERRIRKMKEEEMK. The segment covering 743-756 has biased composition (low complexity); that stretch reads SSLTTTMTNLSSSS. Thr-765 is modified (phosphothreonine). A phosphoserine mark is found at Ser-768 and Ser-774. The disordered stretch occupies residues 812–985; it reads INPHKSDDDK…ALSKTLGLNK (174 aa). Basic and acidic residues-rich tracts occupy residues 815–828 and 854–863; these read HKSD…RPRN and DEEKAIEGPS. Over residues 887-920 the composition is skewed to acidic residues; it reads LDLEDEPSSEEDLGDSYNMDDSEDYDDNAYESET. Positions 970 to 979 are enriched in low complexity; that stretch reads SAAVKSALSK.

Belongs to the fungal Na(+)/H(+) exchanger family.

It localises to the cell membrane. Functionally, sodium export from cell, takes up external protons in exchange for internal sodium ions. Also capable of exporting potassium ions. The protein is Na(+)/H(+) antiporter (NHA1) of Saccharomyces cerevisiae (strain ATCC 204508 / S288c) (Baker's yeast).